Reading from the N-terminus, the 303-residue chain is MYIQVLGSAAGGGFPQWNCNCVNCKGYRDGTLRATARTQSSIALSDDGVHWVLCNASPDIRAQLQAFAPMQPARALRDTGINAIVLLDSQIDHTTGLLSLREGCPHQVWCTDMVHQDLTTGFPLFNMLSHWNGGLQWNRIELEGSFVIEACPNLKFTPFPLRSAAPPYSPHRFDPHPGDNLGLLVEDTRTGGKLFYAPGLGQVDGKLLAMMHDADCLLVDGTLWEDDEMQRRGVGTRTGREMGHLAQNGPGGMLEVLDGFSRQRKVLIHINNTNPILDEDSPERAEVLRRGVEVAFDGMSIEL.

It belongs to the PqqB family.

It participates in cofactor biosynthesis; pyrroloquinoline quinone biosynthesis. In terms of biological role, may be involved in the transport of PQQ or its precursor to the periplasm. This is Coenzyme PQQ synthesis protein B from Pseudomonas putida (strain GB-1).